Reading from the N-terminus, the 365-residue chain is Chorismate synthase (365 aa).

NADP(+) contacts are provided by arginine 48 and arginine 54. Residues 129–131 (RSS), 241–242 (NA), glycine 285, 300–304 (KPTSS), and arginine 326 contribute to the FMN site.

The protein belongs to the chorismate synthase family. Homotetramer. Requires FMNH2 as cofactor.

It carries out the reaction 5-O-(1-carboxyvinyl)-3-phosphoshikimate = chorismate + phosphate. It participates in metabolic intermediate biosynthesis; chorismate biosynthesis; chorismate from D-erythrose 4-phosphate and phosphoenolpyruvate: step 7/7. Catalyzes the anti-1,4-elimination of the C-3 phosphate and the C-6 proR hydrogen from 5-enolpyruvylshikimate-3-phosphate (EPSP) to yield chorismate, which is the branch point compound that serves as the starting substrate for the three terminal pathways of aromatic amino acid biosynthesis. This reaction introduces a second double bond into the aromatic ring system. This is Chorismate synthase from Parvibaculum lavamentivorans (strain DS-1 / DSM 13023 / NCIMB 13966).